Consider the following 345-residue polypeptide: MSSYQKELEKYRDIDEDEILRTLSPEELEQLDCELQEMDPENMLLPAGLRQRDQTKKSPTGPLDRDALLQYLEQQALEVKERDDLVPYTGEKKGKPFIQPKREIPAQEQITLEPELEEALSHATDAEMCDIAAILGMYTLMSNKQYYDAICSGEICNTEGISSVVQPDKYKPVPDEPPNPTNIEEMLKRVRSNDKELEEVNLNNIQDIPIPVLSDLCEAMKTNTYVRSFSLVATKSGDPIANAVADMLRENRSLQSLNIESNFISSTGLMAVLKAVRENATLTELRVDNQRQWPGDAVEMEMATVLEQCPSIVRFGYHFTQQGPRARAAHAMTRNNELRRQQKKR.

Disordered regions lie at residues 40–64 (PENMLLPAGLRQRDQTKKSPTGPLD) and 326–345 (ARAAHAMTRNNELRRQQKKR). The segment covering 336–345 (NELRRQQKKR) has biased composition (basic and acidic residues).

Belongs to the tropomodulin family. In terms of assembly, binds to the N-terminus of tropomyosin and to actin.

It localises to the cytoplasm. The protein localises to the cytoskeleton. Functionally, blocks the elongation and depolymerization of the actin filaments at the pointed end. The Tmod/TM complex contributes to the formation of the short actin protofilament, which in turn defines the geometry of the membrane skeleton. This chain is Tropomodulin-4 (Tmod4), found in Mus musculus (Mouse).